The primary structure comprises 192 residues: NADH:FMN oxidoreductase (192 aa).

The segment at Met-1 to Ala-20 is disordered. Residues Thr-60–Ser-63, Asn-77–Ser-84, Ala-111, and Arg-117 each bind FMN.

It belongs to the non-flavoprotein flavin reductase family.

It is found in the cytoplasm. The catalysed reaction is FMNH2 + NAD(+) = FMN + NADH + 2 H(+). The protein operates within sulfur metabolism; dibenzothiophene degradation. In terms of biological role, an NADH:FMN oxidoreductase which supplies reduced FMN for the '4S' desulfurization pathway that removes covalently bound sulfur from dibenzothiophene (DBT) without breaking carbon-carbon bonds. Provides DszA and DszC (DBTO2-monooxygenase and DBT-monooxygenase respectively) with reduced flavin (FMN). The polypeptide is NADH:FMN oxidoreductase (Rhodococcus erythropolis (Arthrobacter picolinophilus)).